A 330-amino-acid chain; its full sequence is uncharacterized protein (330 aa).

This is an uncharacterized protein from Acanthamoeba polyphaga (Amoeba).